Consider the following 535-residue polypeptide: Calcium-dependent protein kinase 1 (535 aa).

The tract at residues 1–34 (MGCNQSKSANDVRGNKVNNVNSKKKNNKREDIND) is disordered. G2 carries the N-myristoyl glycine lipid modification. Residue C3 is the site of S-palmitoyl cysteine attachment. The Protein kinase domain occupies 57-324 (YFKVRKLGSG…AEEALNSRWI (268 aa)). ATP contacts are provided by residues 63–71 (LGSGAYGEV) and K86. S65 carries the post-translational modification Phosphoserine. The residue at position 117 (S117) is a Phosphoserine. The active-site Proton acceptor is D190. A phosphoserine mark is found at S216 and S219. T230 bears the Phosphothreonine mark. Phosphoserine is present on S334. A J domain autoinhibitory motif motif is present at residues 345–352 (NMRKFEGS). A j domain region spans residues 345-363 (NMRKFEGSQKLAQAAILFI). Positions 353–363 (QKLAQAAILFI) match the J domain interacts with the EF-hand domains motif. 4 EF-hand domains span residues 371 to 406 (EERK…LRNF), 415 to 450 (NVEE…KQIL), 451 to 486 (FSEE…GFYF), and 497 to 532 (VSEK…ICDN). Residues D384, N386, D388, Q390, E395, D428, D430, N432, Y434, E439, D464, D466, S468, K470, E475, D510, N512, D514, M516, and E521 each contribute to the Ca(2+) site.

This sequence belongs to the protein kinase superfamily. Ser/Thr protein kinase family. CDPK subfamily. In terms of assembly, monomer. Mg(2+) is required as a cofactor. Myristoylated. Myristoylation and palmitoylation are required for the localization to the parasitophorous vacuole membrane. In terms of processing, palmitoylated. Palmitoylation increases in merozoites in response to low level of extracellular K(+) in the host blood. Myristoylation and palmitoylation are required for the localization to the parasitophorous vacuole membrane. Post-translationally, phosphorylation at Thr-230 may regulate CDPK1 kinase activity. Phosphorylation increases in response to an increase in intracellular Ca(2+) levels. Autophosphorylated in vitro. Autophosphorylation does not affect membrane localization in vitro.

The protein localises to the membrane. It is found in the cell membrane. Its subcellular location is the parasitophorous vacuole membrane. It localises to the cytoplasm. The protein resides in the cell projection. The protein localises to the cilium. It is found in the flagellum. Its subcellular location is the host cell membrane. The enzyme catalyses L-seryl-[protein] + ATP = O-phospho-L-seryl-[protein] + ADP + H(+). It carries out the reaction L-threonyl-[protein] + ATP = O-phospho-L-threonyl-[protein] + ADP + H(+). Its activity is regulated as follows. Activated by calcium. Upon calcium binding to the EF-hand domains, the C-terminus of the junction domain (J domain) undergoes a conformational change which results in the dissociation of the pseudo-substrate inhibitory motif from the catalytic domain. This, in turn may facilitate the autophosphorylation of the activation loop at Thr-230, which leads to the kinase activation. In terms of biological role, calcium-dependent protein kinase which acts as a sensor and effector of intracellular Ca(2+) levels probably in part downstream of cGMP-activated PKG kinase. During the liver stage, involved in sporozoite motility and thus in sporozoite invasion of host hepatocytes, probably together with CDPK4 and CDPK5. In the mosquito midgut and during the last stage of male gamete exflagellation, may play a role in the rupture of the host erythrocyte membrane. In the mosquito midgut, required for the differentiation of the zygote into the ookinete by promoting the translational activation of a subset of repressed mRNAs; these mRNAs are kept repressed in the zygote by the DOZI- or CITH-containing mRNP complexes. Dispensable during the asexual blood stage. The protein is Calcium-dependent protein kinase 1 of Plasmodium yoelii yoelii.